The primary structure comprises 207 residues: Small ribosomal subunit protein uS4 (207 aa).

A disordered region spans residues 31–52 (KAKFDSKPGQHGRTSGARTSDY). Residues 97 to 157 (CRLDNVVYRM…DKSKKQARIV (61 aa)) enclose the S4 RNA-binding domain.

The protein belongs to the universal ribosomal protein uS4 family. Part of the 30S ribosomal subunit. Contacts protein S5. The interaction surface between S4 and S5 is involved in control of translational fidelity.

In terms of biological role, one of the primary rRNA binding proteins, it binds directly to 16S rRNA where it nucleates assembly of the body of the 30S subunit. Its function is as follows. With S5 and S12 plays an important role in translational accuracy. The polypeptide is Small ribosomal subunit protein uS4 (Acidovorax sp. (strain JS42)).